The sequence spans 412 residues: Peptidase T (412 aa).

Residue histidine 79 coordinates Zn(2+). Aspartate 81 is an active-site residue. Residue aspartate 142 coordinates Zn(2+). Catalysis depends on glutamate 176, which acts as the Proton acceptor. Residues glutamate 177, aspartate 199, and histidine 381 each contribute to the Zn(2+) site.

It belongs to the peptidase M20B family. Zn(2+) serves as cofactor.

It localises to the cytoplasm. It catalyses the reaction Release of the N-terminal residue from a tripeptide.. Its function is as follows. Cleaves the N-terminal amino acid of tripeptides. In Exiguobacterium sp. (strain ATCC BAA-1283 / AT1b), this protein is Peptidase T.